Consider the following 435-residue polypeptide: MLPDFITVPSTSEKCLSPELLLPNMDENLEDSKPSSLKYQKAMMSRGTCPSNCKVCRHSATGYHYDVPSCNGCKTFFRRSILDGRKYTCLKMRKCLSGTEPVDLSRRMCRACRFEKCVEAGMNPSAIQADMKTTDGELLRKEIMIKQKTAVDFLNTPQVIMSFEDKVQGIIGKLTVMELKIEPLYTGGLPPGNRDIRKLDELIDAPLILSYDEIPNLKYCPSVDELTGEIKPSGACYIHCGYLASIEYSKMFDFAHKIDVASKATLIKHATIMCADIMTAFFSYYQRKSDRLIHPNGMFAGPPKYRYGEAGTKYQASMQRTLATVLRHELNRIEYMLLKAIVLCNPAVSSLSISVQQIIGKEREEYVRTLLTYCLLNYGSVHGPSRFSALLAIMSVLESQQKNAKDFHLLAKATILKDAVRYTRISNLYEQIMES.

Residues 50 to 129 constitute a DNA-binding region (nuclear receptor); that stretch reads PSNCKVCRHS…AGMNPSAIQA (80 aa). NR C4-type zinc fingers lie at residues 53 to 73 and 89 to 112; these read CKVC…CNGC and CLKM…CRAC. The 237-residue stretch at 194–430 folds into the NR LBD domain; it reads RDIRKLDELI…RYTRISNLYE (237 aa).

The protein belongs to the nuclear hormone receptor family.

Its subcellular location is the nucleus. In terms of biological role, orphan nuclear receptor. This Caenorhabditis elegans protein is Nuclear hormone receptor family member nhr-136 (nhr-136).